Reading from the N-terminus, the 447-residue chain is Protein chibby homolog 2 (447 aa).

Serine 41, serine 85, serine 88, serine 96, serine 123, serine 143, serine 147, and serine 149 each carry phosphoserine. Residues 164-197 (EYLLQEENKSLRDENRALRDENKALRKENKILQV) are a coiled coil. Disordered regions lie at residues 208–244 (HEES…KENT) and 266–320 (WAQA…EDSK). 2 positions are modified to phosphoserine: serine 211 and serine 224. The span at 218 to 232 (LHKDTTSQEVVKKDN) shows a compositional bias: basic and acidic residues. Residues 237–264 (AQRSKENTLQFIREENRALQQLLEQRQA) are a coiled coil. The span at 266-276 (WAQAEESATSA) shows a compositional bias: low complexity. 2 positions are modified to phosphoserine: serine 272 and serine 275. Positions 277-290 (EEGKPTSSPKEEPH) are enriched in basic and acidic residues. Residues serine 333 and serine 336 each carry the phosphoserine modification. A coiled-coil region spans residues 354-412 (LQLLREMNQALQALREENRLLQEENRALHAMREEHRVFQEENKALWENNKLKLQQRLVI).

This sequence belongs to the chibby family. SPERT subfamily. Homodimer. Binds to NEK1.

This chain is Protein chibby homolog 2 (Cby2), found in Rattus norvegicus (Rat).